Reading from the N-terminus, the 278-residue chain is Bicarbonate transport ATP-binding protein CmpD (278 aa).

The ABC transporter domain maps to 21 to 254 (LIVENVSKIY…RPRDRERIME (234 aa)). 57 to 64 (GHSGCGKS) is a binding site for ATP.

Belongs to the ABC transporter superfamily. Nitrate/nitrite/cyanate uptake transporter (NitT) (TC 3.A.1.16) family. The complex is composed of two ATP-binding proteins (CmpC and CmpD), a transmembrane protein (CmpB) and a solute-binding protein (CmpA).

The protein localises to the cell inner membrane. Functionally, part of the ABC transporter complex CmpABCD involved in bicarbonate transport. Responsible for energy coupling to the transport system. The sequence is that of Bicarbonate transport ATP-binding protein CmpD (cmpD) from Synechococcus elongatus (strain ATCC 33912 / PCC 7942 / FACHB-805) (Anacystis nidulans R2).